The primary structure comprises 400 residues: Phosphoglycerate kinase (400 aa).

Substrate contacts are provided by residues 23–25, Arg-38, 61–64, Arg-120, and Arg-153; these read DLN and HFGR. ATP contacts are provided by residues Lys-203, Glu-325, and 355-358; that span reads GGDT.

The protein belongs to the phosphoglycerate kinase family. In terms of assembly, monomer.

The protein resides in the cytoplasm. The enzyme catalyses (2R)-3-phosphoglycerate + ATP = (2R)-3-phospho-glyceroyl phosphate + ADP. It functions in the pathway carbohydrate degradation; glycolysis; pyruvate from D-glyceraldehyde 3-phosphate: step 2/5. The protein is Phosphoglycerate kinase of Methylorubrum extorquens (strain PA1) (Methylobacterium extorquens).